Reading from the N-terminus, the 396-residue chain is Protein PIN-LIKES 5 (396 aa).

At 1–5 (MGFWS) the chain is on the lumenal side. Residues 6–26 (LLEVASMPVIQVLFMSLVGAF) traverse the membrane as a helical segment. Topologically, residues 27–45 (MASDRCKLFPVEARNSMNK) are cytoplasmic. Residues 46-66 (VVFVLFAPALMFANLAQTVTL) form a helical membrane-spanning segment. Residues 67 to 73 (EDIISWW) are Lumenal-facing. A helical transmembrane segment spans residues 74–94 (FMPVNMGLTFLIGGLLGWLVV). The Cytoplasmic portion of the chain corresponds to 95–106 (KILKPPPYLEGL). The chain crosses the membrane as a helical span at residues 107-127 (IVATCSAGNMGNLPIILVPAI). The Lumenal segment spans residues 128–144 (CDEDKSPFGNRSVCRTV). A helical membrane pass occupies residues 145–165 (GLSYASFSMALGGFYIWTYTF). At 166-229 (RLIKGSAMKV…WRKGVDFLHE (64 aa)) the chain is on the cytoplasmic side. The helical transmembrane segment at 230-250 (ILEELLAPPTLGAIIGFIFGA) threads the bilayer. The Lumenal portion of the chain corresponds to 251-273 (VRWLRNLIIGDDAPLRIVQSTAK). Residues 274 to 294 (LLGDGTIPCMTIILGGNLIQG) traverse the membrane as a helical segment. The Cytoplasmic segment spans residues 295-312 (LRSSAVKPMVVLGIVCVR). A helical membrane pass occupies residues 313-333 (YIAMPIIGIGIVLTAANLGFL). At 334-337 (PADP) the chain is on the lumenal side. The helical transmembrane segment at 338 to 358 (LFQYVLMLQFTLPPAMNIGTM) threads the bilayer. Over 359-370 (TQLYNVAQDECS) the chain is Cytoplasmic. A helical membrane pass occupies residues 371–391 (VLMLWTYLVAILALTVWSTIF). At 392–396 (LHLLV) the chain is on the lumenal side.

This sequence belongs to the auxin efflux carrier (TC 2.A.69.2) family. Expressed in seedlings, cauline leaves and flowers.

Its subcellular location is the endoplasmic reticulum membrane. In terms of biological role, involved in cellular auxin homeostasis by regulating auxin metabolism. Regulates intracellular auxin accumulation at the endoplasmic reticulum and thus auxin availability for nuclear auxin signaling. The chain is Protein PIN-LIKES 5 from Arabidopsis thaliana (Mouse-ear cress).